The primary structure comprises 122 residues: Large ribosomal subunit protein bL12 (122 aa).

It belongs to the bacterial ribosomal protein bL12 family. As to quaternary structure, homodimer. Part of the ribosomal stalk of the 50S ribosomal subunit. Forms a multimeric L10(L12)X complex, where L10 forms an elongated spine to which 2 to 4 L12 dimers bind in a sequential fashion. Binds GTP-bound translation factors.

Functionally, forms part of the ribosomal stalk which helps the ribosome interact with GTP-bound translation factors. Is thus essential for accurate translation. This Shewanella denitrificans (strain OS217 / ATCC BAA-1090 / DSM 15013) protein is Large ribosomal subunit protein bL12.